The primary structure comprises 104 residues: Secretoglobin family 3A member 1 (104 aa).

Residues 1–20 (MKLAALLGLCVALSCSSAAA) form the signal peptide.

Belongs to the secretoglobin family. UGRP subfamily. In terms of assembly, homodimer; disulfide-linked. As to expression, highly expressed in lung and prostate. Also found in mammary gland, spleen, pancreas, testis and liver. Detected throughout the airway epithelium in lung, with highest expression in large airways. Found in lung submucosal glands where it localizes to acinar and ductile cells. Not detected in respiratory bronchioles, alveolar ducts or alveolar epithelium. In mammary gland, specifically localizes to luminal epithelial cells.

It localises to the secreted. Secreted cytokine-like protein. Inhibits cell growth in vitro. The sequence is that of Secretoglobin family 3A member 1 (SCGB3A1) from Homo sapiens (Human).